Consider the following 206-residue polypeptide: Platelet glycoprotein Ib beta chain (206 aa).

Residues 1 to 25 (MGSGPRGALSLLLLLLAPPSRPAAG) form the signal peptide. Intrachain disulfides connect C26/C32 and C30/C39. The region spanning 27-55 (PAPCSCAGTLVDCGRRGLTWASLPTAFPV) is the LRRNT domain. The Extracellular segment spans residues 27 to 147 (PAPCSCAGTL…RAACAPGPLC (121 aa)). One copy of the LRR repeat lies at 60–83 (LVLTGNNLTALPPGLLDALPALRT). N66 is a glycosylation site (N-linked (GlcNAc...) asparagine). The LRRCT domain maps to 89–143 (NPWRCDCRLVPLRAWLAGRPERAPYRDLRCVAPPALRGRLLPYLAEDELRAACAP). Intrachain disulfides connect C93–C118 and C95–C141. A helical membrane pass occupies residues 148–172 (WGALAAQLALLGLGLLHALLLVLLL). Over 173–206 (CRLRRLRARARARAAARLSLTDPLVAERAGTDES) the chain is Cytoplasmic. The residue at position 191 (S191) is a Phosphoserine; by PKA. Residue T193 is modified to Phosphothreonine.

In terms of assembly, two GP-Ib beta are disulfide-linked to one GP-Ib alpha. GP-IX is complexed with the GP-Ib heterodimer via a non covalent linkage. Interacts with TRAF4. In terms of tissue distribution, expressed in heart and brain.

The protein resides in the membrane. Gp-Ib, a surface membrane protein of platelets, participates in the formation of platelet plugs by binding to von Willebrand factor, which is already bound to the subendothelium. The protein is Platelet glycoprotein Ib beta chain (GP1BB) of Homo sapiens (Human).